We begin with the raw amino-acid sequence, 437 residues long: Aspartokinase (437 aa).

The protein belongs to the aspartokinase family.

The enzyme catalyses L-aspartate + ATP = 4-phospho-L-aspartate + ADP. Its pathway is amino-acid biosynthesis; L-lysine biosynthesis via DAP pathway; (S)-tetrahydrodipicolinate from L-aspartate: step 1/4. It functions in the pathway amino-acid biosynthesis; L-methionine biosynthesis via de novo pathway; L-homoserine from L-aspartate: step 1/3. The protein operates within amino-acid biosynthesis; L-threonine biosynthesis; L-threonine from L-aspartate: step 1/5. The chain is Aspartokinase (lysC) from Chlamydia muridarum (strain MoPn / Nigg).